Reading from the N-terminus, the 285-residue chain is Nucleotide-binding protein NTHI1314 (285 aa).

8–15 (GRSGAGKS) lines the ATP pocket. 56 to 59 (DIRN) lines the GTP pocket.

The protein belongs to the RapZ-like family.

Displays ATPase and GTPase activities. This chain is Nucleotide-binding protein NTHI1314, found in Haemophilus influenzae (strain 86-028NP).